Consider the following 233-residue polypeptide: MPAAKRTPKVNRNPDLIRGVGKYSRSQMYHKRGLWAIKAKNGGVFPRHDAQPKVDAPVEKPAKFYPAEDVKKPLVNRRKPKPTKLKASITPGTVLIILAGRFKGKRVVFLKQLSSGLLLVTGPFKINGVPLRRVNQAYVIGTSTKIDISGVNTEKFDDKYFGKVAEKKKKKTEGEFFEAEKEEKKEIPQEKKEDQKTVDAALIKSIEAVPELKVYLGARFSLSQGMKPHELVF.

The segment at 175-195 is disordered; it reads EFFEAEKEEKKEIPQEKKEDQ.

The protein belongs to the eukaryotic ribosomal protein eL6 family.

The sequence is that of Large ribosomal subunit protein eL6z (RPL6A) from Arabidopsis thaliana (Mouse-ear cress).